The primary structure comprises 208 residues: MLKLAIPKGRLEEKVMELLKKAGYTFQKESSILREGEDVTCFMVRPFDVPTYLTYGVADIGFCGTDVLLEKETSLIQPFFIPTNVSRMVLAGPKGKKIPEGEKRIATKFPNITRRYCESRGWHCKIIPLKGSVELAPIAGLSDLIVDITETGRTLRENDLEVLDEIFIIRTHVVVNPVSYRTKREEVISFLEKLQEVMKNDNHEKSHR.

Belongs to the ATP phosphoribosyltransferase family. Short subfamily. In terms of assembly, heteromultimer composed of HisG and HisZ subunits.

It is found in the cytoplasm. It catalyses the reaction 1-(5-phospho-beta-D-ribosyl)-ATP + diphosphate = 5-phospho-alpha-D-ribose 1-diphosphate + ATP. Its pathway is amino-acid biosynthesis; L-histidine biosynthesis; L-histidine from 5-phospho-alpha-D-ribose 1-diphosphate: step 1/9. In terms of biological role, catalyzes the condensation of ATP and 5-phosphoribose 1-diphosphate to form N'-(5'-phosphoribosyl)-ATP (PR-ATP). Has a crucial role in the pathway because the rate of histidine biosynthesis seems to be controlled primarily by regulation of HisG enzymatic activity. This is ATP phosphoribosyltransferase from Thermotoga neapolitana (strain ATCC 49049 / DSM 4359 / NBRC 107923 / NS-E).